The following is a 263-amino-acid chain: Inactive adenylate kinase (263 aa).

This sequence belongs to the adenylate kinase family.

The protein resides in the cytoplasm. Functionally, lacks adenylate kinase activity. The polypeptide is Inactive adenylate kinase (Plasmodium falciparum (isolate 3D7)).